A 206-amino-acid chain; its full sequence is Large ribosomal subunit protein uL4 (206 aa).

It belongs to the universal ribosomal protein uL4 family. In terms of assembly, part of the 50S ribosomal subunit.

Its function is as follows. One of the primary rRNA binding proteins, this protein initially binds near the 5'-end of the 23S rRNA. It is important during the early stages of 50S assembly. It makes multiple contacts with different domains of the 23S rRNA in the assembled 50S subunit and ribosome. In terms of biological role, forms part of the polypeptide exit tunnel. This Methylobacterium radiotolerans (strain ATCC 27329 / DSM 1819 / JCM 2831 / NBRC 15690 / NCIMB 10815 / 0-1) protein is Large ribosomal subunit protein uL4.